The following is a 215-amino-acid chain: MLQVYLVRHGETQWNAERRIQGQSDSPLTAKGEQQAMQVGERARSLGSTHIISSDLGRTKRTAEIIAQACGCDITFDSRLRELDMGVLEKRQIDSLTEEEEGWRRQLVNGTQDGRIPGGESMQELSDRVHAALASCLELPQGSRPLLVSHGIALGCLVSTILGLPAWAERRLRLRNCSISRIDYQESQWLASGWVVETAGDVSHLDAPALDELQR.

Substrate contacts are provided by residues 8–15 (RHGETQWN), 21–22 (QG), Arg58, Lys60, 82–85 (ELDM), 104–105 (RR), and 151–152 (GI). Residue His9 is the Tele-phosphohistidine intermediate of the active site. Glu82 acts as the Proton donor/acceptor in catalysis.

Belongs to the phosphoglycerate mutase family. GpmB subfamily.

The catalysed reaction is (2R)-2-phosphoglycerate = (2R)-3-phosphoglycerate. Its pathway is carbohydrate degradation; glycolysis; pyruvate from D-glyceraldehyde 3-phosphate: step 3/5. The chain is Probable phosphoglycerate mutase GpmB from Salmonella paratyphi C (strain RKS4594).